Consider the following 119-residue polypeptide: MPHLAAEAHTWPPHISHSTLSIPHPTPEHRHVFHKKDVKNKRNEEKGNNLLYVLFRTTVIKSSFRSLSTAGRELLFVVHQGHIGTGLIVFIICWRLCLRFLCRVSFQVTVYGGRSRMSA.

The interval 1 to 20 (MPHLAAEAHTWPPHISHSTL) is disordered. A helical transmembrane segment spans residues 74–94 (LLFVVHQGHIGTGLIVFIICW).

Its subcellular location is the membrane. This is an uncharacterized protein from Saccharomyces cerevisiae (strain ATCC 204508 / S288c) (Baker's yeast).